Here is a 78-residue protein sequence, read N- to C-terminus: Putative membrane protein insertion efficiency factor (78 aa).

Belongs to the UPF0161 family.

It is found in the cell inner membrane. Could be involved in insertion of integral membrane proteins into the membrane. This Thiobacillus denitrificans (strain ATCC 25259 / T1) protein is Putative membrane protein insertion efficiency factor.